Consider the following 185-residue polypeptide: Ribosome-recycling factor (185 aa).

Positions 143–163 are disordered; it reads RKDGEAGEDEVARAEKDLDKS.

This sequence belongs to the RRF family.

It localises to the cytoplasm. In terms of biological role, responsible for the release of ribosomes from messenger RNA at the termination of protein biosynthesis. May increase the efficiency of translation by recycling ribosomes from one round of translation to another. The chain is Ribosome-recycling factor from Mycobacterium ulcerans (strain Agy99).